The following is a 236-amino-acid chain: MAGVVRLTTTSVQAIRVSSSFSSFATALNPLQPCLPPNSNLNSDKRLRLLSSSPSCSSSHYHPSSGLGSHLPLRRPKSQVVRVKVDENVAETEPPKWWERNAPNMVDIHSTEEFLSALSGAGERLVIVEFYGTWCASCRALFPKLCKTAVEHPDIVFLKVNFDENKPMCKSLNVRVLPFFHFYRGADGQLESFSCSLAKVKKAISVSPFPQLELGITLQTKRTTSLFFFDRIYQIL.

A chloroplast-targeting transit peptide spans 1–82; sequence MAGVVRLTTT…LRRPKSQVVR (82 aa). A Thioredoxin domain is found at 83-220; the sequence is VKVDENVAET…QLELGITLQT (138 aa). Residues Cys135 and Cys138 each act as nucleophile in the active site. Residues Cys135 and Cys138 are joined by a disulfide bond.

This sequence belongs to the thioredoxin family.

The protein localises to the plastid. The protein resides in the chloroplast. Functionally, thiol-disulfide oxidoreductase that may participate in various redox reactions. Possesses insulin disulfide bonds reducing activity. This chain is Thioredoxin-like 2-2, chloroplastic, found in Arabidopsis thaliana (Mouse-ear cress).